The chain runs to 441 residues: ACT domain-containing protein ACR8 (441 aa).

ACT domains lie at Ile-34 to Val-110, Ala-115 to Lys-196, Val-248 to Gly-324, and Arg-326 to His-405.

As to expression, expressed in roots, leaves, flowers and siliques.

Its function is as follows. May bind amino acids. This Arabidopsis thaliana (Mouse-ear cress) protein is ACT domain-containing protein ACR8.